Here is a 534-residue protein sequence, read N- to C-terminus: MWLLLQLVWLCFLLSLGLNSWHQSKVPEYPDELRCGLRSFQFTINPLSQETETPPVLVAWDNHGLPHSLQNDSDCGTWVSEGPGSSLVGEASYSGCYVTEWESYYIMTVGIERAGVSGSGAFIETKLFKCPVNLPDVPNAGLCDSVPVWDRLPCAPSPITQGDCKQLGCCYNSEEVISCYYGNTVTSHCTQDGHFSIAVSRNVTSPPLLLNSVHLAFRNDSECKPVMATHTFVLFRFPFTTCGTTKQITGKQAVYENELVAARDVRTWSRGSITRDSTFRLQVSCSYSASSSALPVNVQVLTLPPPLPETQPGNLTLELKIAKDKRYRSYYTASDYPVVKLLRDPIYVEVSIHQRTDPSLELRLDQCWATPGADALLQPQWPLLVNGCPYTGDNYQTKLIPVWEASDLPFPSHYQRFSISTFSFVDSVAKRALKGPVYLHCSASVCQPAGTPSCVTLCPARRRRSSDIHFQNNTASISSKGPLILLQAIQDSSEKLHKYSRSPVDSQALWVAGLSGILIVGALFMSYLAIRKWR.

An N-terminal signal peptide occupies residues 1-17 (MWLLLQLVWLCFLLSLG). The Extracellular segment spans residues 18 to 509 (LNSWHQSKVP…SRSPVDSQAL (492 aa)). The N-linked (GlcNAc...) asparagine glycan is linked to asparagine 71. In terms of domain architecture, P-type spans 141 to 183 (GLCDSVPVWDRLPCAPSPITQGDCKQLGCCYNSEEVISCYYGN). The 278-residue stretch at 188–465 (HCTQDGHFSI…TLCPARRRRS (278 aa)) folds into the ZP domain. Residues asparagine 202 and asparagine 219 are each glycosylated (N-linked (GlcNAc...) asparagine). The O-linked (GalNAc...) serine glycan is linked to serine 292. Residue threonine 302 is glycosylated (O-linked (GalNAc...) threonine). An N-linked (GlcNAc...) asparagine glycan is attached at asparagine 314. Cysteines 367 and 441 form a disulfide. The propeptide at 462 to 534 (RRRSSDIHFQ…MSYLAIRKWR (73 aa)) is removed in mature form. Residue asparagine 472 is glycosylated (N-linked (GlcNAc...) asparagine). The helical transmembrane segment at 510–530 (WVAGLSGILIVGALFMSYLAI) threads the bilayer. Topologically, residues 531–534 (RKWR) are cytoplasmic.

This sequence belongs to the ZP domain family. ZPB subfamily. In terms of processing, proteolytically cleaved before the transmembrane segment to yield the secreted ectodomain incorporated in the zona pellucida. The N-terminus is blocked. Post-translationally, contains disulfide bond(s). In terms of tissue distribution, expressed in oocytes.

Its subcellular location is the zona pellucida. It is found in the cell membrane. Component of the zona pellucida, an extracellular matrix surrounding oocytes which mediates sperm binding, induction of the acrosome reaction and prevents post-fertilization polyspermy. The zona pellucida is composed of 3 to 4 glycoproteins, ZP1, ZP2, ZP3, and ZP4. ZP4 may act as a sperm receptor. In Bos taurus (Bovine), this protein is Zona pellucida sperm-binding protein 4 (ZP4).